A 620-amino-acid chain; its full sequence is 1-deoxy-D-xylulose-5-phosphate synthase (620 aa).

Thiamine diphosphate is bound by residues histidine 80 and 121 to 123 (GHS). Aspartate 152 provides a ligand contact to Mg(2+). Thiamine diphosphate contacts are provided by residues 153-154 (GA), asparagine 181, tyrosine 288, and glutamate 370. Residue asparagine 181 participates in Mg(2+) binding.

This sequence belongs to the transketolase family. DXPS subfamily. Homodimer. Requires Mg(2+) as cofactor. It depends on thiamine diphosphate as a cofactor.

It catalyses the reaction D-glyceraldehyde 3-phosphate + pyruvate + H(+) = 1-deoxy-D-xylulose 5-phosphate + CO2. The protein operates within metabolic intermediate biosynthesis; 1-deoxy-D-xylulose 5-phosphate biosynthesis; 1-deoxy-D-xylulose 5-phosphate from D-glyceraldehyde 3-phosphate and pyruvate: step 1/1. Catalyzes the acyloin condensation reaction between C atoms 2 and 3 of pyruvate and glyceraldehyde 3-phosphate to yield 1-deoxy-D-xylulose-5-phosphate (DXP). This Escherichia coli (strain 55989 / EAEC) protein is 1-deoxy-D-xylulose-5-phosphate synthase.